Here is a 423-residue protein sequence, read N- to C-terminus: Mannose-6-phosphate isomerase (423 aa).

An N-acetylalanine modification is found at Ala2. Ser102 and Ser108 each carry phosphoserine. Zn(2+)-binding residues include Gln110, His112, Glu137, and His276. Residue Arg295 is part of the active site.

This sequence belongs to the mannose-6-phosphate isomerase type 1 family. Zn(2+) is required as a cofactor.

It is found in the cytoplasm. The catalysed reaction is D-mannose 6-phosphate = D-fructose 6-phosphate. It functions in the pathway nucleotide-sugar biosynthesis; GDP-alpha-D-mannose biosynthesis; alpha-D-mannose 1-phosphate from D-fructose 6-phosphate: step 1/2. Isomerase that catalyzes the interconversion of fructose-6-P and mannose-6-P and has a critical role in the supply of D-mannose derivatives required for many eukaryotic glycosylation reactions. The chain is Mannose-6-phosphate isomerase (MPI) from Macaca fascicularis (Crab-eating macaque).